Consider the following 154-residue polypeptide: UPF0225 protein SG1365 (154 aa).

The protein belongs to the UPF0225 family.

This chain is UPF0225 protein SG1365, found in Sodalis glossinidius (strain morsitans).